Consider the following 254-residue polypeptide: Protein GltF (254 aa).

Positions 1 to 25 (MFFKKNLTTAAICAALSVAAFSAMA) are cleaved as a signal peptide. Residues 213-229 (PVAITAVTFPLLIDAAV) form a helical membrane-spanning segment.

To E.coli YhcF.

The protein localises to the cell membrane. In terms of biological role, involved in induction of the so-called NTR enzymes in response to nitrogen deprivation, as well as in glutamate biosynthesis. May mediate the glutamate-dependent repression of the GLT operon. This Escherichia coli (strain K12) protein is Protein GltF (gltF).